Here is a 680-residue protein sequence, read N- to C-terminus: MIDRYKHQQLRIGSVSPQQISAWATKIIPNGEIVGEVTKPYTFHYKTNKPEKDGLFCERIFGPIKSGICACGNYRVIGDEKEDPKFCEQCGVEFVGSRIRRYQMGYIKLTCPVTHVWYLKRLPSYIANLLDKPLKELEGLVYCDFSFARPITKKPTFLRLRGSFEYEIQSWKYSIPLFFTTQGFDIFRNREISTGAGAIREQLADLDLRIIIENSLVEWKQLGEEGPTGNEWEDRKIVRRKDFLVRRMELAKHFIRTNIEPEWMVLCLLPVLPPELRPIIQIEGGKLMSSDINELYRRVIYRNNTLTDLLTTSRSTPGELVMCQEKLVQEAVDTLLDNGIRGQPMRDGHNKVYKSFSDVIEGKEGRFRETLLGKRVDYSGRSVIVVGPSLSLHRCGLPREIAIELFQTFVIRGLIRQHLASNIGVAKSQIRENKPIVWEILQEVMQGHPVLLNRAPTLHRLGIQSFQPILVEGRTICLHPLVCKGFNADFDGDQMAVHVPLSLEAQAEARLLMFSHMNLLSPAIGDPISVPTQDMLIGLYVLTSGTRRGICANRYNPCNRKNYQNERIYETNYKYMKEPFFCNSYDAIGAYRQKRINLDSPLWLRWQLDQRVSASREVPIEVHYESFGTYHEIYAHYLIVRSIKKETFCVYIRTTVGHISFYREIEEAIQGFSQACSYDT.

4 residues coordinate Zn(2+): Cys-69, Cys-71, Cys-87, and Cys-90. Asp-489, Asp-491, and Asp-493 together coordinate Mg(2+).

Belongs to the RNA polymerase beta' chain family. RpoC1 subfamily. As to quaternary structure, in plastids the minimal PEP RNA polymerase catalytic core is composed of four subunits: alpha, beta, beta', and beta''. When a (nuclear-encoded) sigma factor is associated with the core the holoenzyme is formed, which can initiate transcription. The cofactor is Mg(2+). It depends on Zn(2+) as a cofactor.

The protein resides in the plastid. It is found in the chloroplast. The enzyme catalyses RNA(n) + a ribonucleoside 5'-triphosphate = RNA(n+1) + diphosphate. In terms of biological role, DNA-dependent RNA polymerase catalyzes the transcription of DNA into RNA using the four ribonucleoside triphosphates as substrates. The polypeptide is DNA-directed RNA polymerase subunit beta' (Aethionema cordifolium (Lebanon stonecress)).